A 643-amino-acid chain; its full sequence is Pescadillo homolog (643 aa).

The region spanning 319–412 (KLKTLFKGLK…RLLPTNKYFM (94 aa)) is the BRCT domain. Disordered regions lie at residues 437-475 (AARKAAEGEEEEETFEPAEVNADHEHISDDEEVQDPENE), 492-571 (TDSL…YREN), and 609-643 (DKNARLLANKRERIEKQKRAEQMEKQKQQRKQILA). Over residues 464-475 (SDDEEVQDPENE) the composition is skewed to acidic residues. Residues 492 to 518 (TDSLNSGKKEGADDATDNGKDAAEKKQ) are compositionally biased toward basic and acidic residues. Acidic residues predominate over residues 524–544 (GESDDEDEEEEDDDDGEEEED). Residues 569 to 643 (RENEAEKKIV…QKQQRKQILA (75 aa)) adopt a coiled-coil conformation. Residues 609–635 (DKNARLLANKRERIEKQKRAEQMEKQK) are compositionally biased toward basic and acidic residues.

This sequence belongs to the pescadillo family.

Its subcellular location is the nucleus. It is found in the nucleolus. It localises to the nucleoplasm. Its function is as follows. Required for maturation of ribosomal RNAs and formation of the large ribosomal subunit. This is Pescadillo homolog from Anopheles gambiae (African malaria mosquito).